A 287-amino-acid chain; its full sequence is Gliotoxin thiomethyltransferase GtmA (287 aa).

2 residues coordinate S-adenosyl-L-methionine: T27 and A54. An intrachain disulfide couples C55 to C80. The S-adenosyl-L-methionine site is built by D82, M87, N109, A110, A126, and R248.

This sequence belongs to the class I-like SAM-binding methyltransferase superfamily.

The protein localises to the cytoplasm. It catalyses the reaction a thiol + S-adenosyl-L-methionine = a methyl thioether + S-adenosyl-L-homocysteine + H(+). In terms of biological role, S-methyltransferase that catalyzes the irreversible conversion of the secondary metabolite gliotoxin to bis(methylthio)gliotoxin (BmGT). Gliotoxin, a member of the epipolythiodioxopiperazine (ETP) class of toxins, is characterized by a disulfide bridged cyclic dipeptide. Its thiol groups are essential for bioactivity, as they conjugate to sulfur-containing proteins, disturb the intracellular redox equilibrium, and generate reactive oxygen species by cycling between reduced and oxidized states. The enzyme prevents self-intoxication of the fungus by irreversible conversion of the toxic gliotoxin to a biologically inactive bis-thiomethylated derivative. Appears to negatively regulate gliotoxin biosynthesis. The chain is Gliotoxin thiomethyltransferase GtmA from Aspergillus fumigatus (strain ATCC MYA-4609 / CBS 101355 / FGSC A1100 / Af293) (Neosartorya fumigata).